The chain runs to 62 residues: Alpha-conotoxin-like Bn1.3 (62 aa).

An N-terminal signal peptide occupies residues 1 to 18 (MGMRMMFTVFLLVVLATA). A propeptide spanning residues 19 to 48 (VLPVTLDRASDGRNAAANAKTPRLIAPFIR) is cleaved from the precursor. 2 disulfide bridges follow: Cys-51–Cys-57 and Cys-52–Cys-61. Position 61 is a cysteine amide (Cys-61).

The protein belongs to the conotoxin A superfamily. In terms of tissue distribution, expressed by the venom duct.

Its subcellular location is the secreted. In terms of biological role, does not show activity on the acetylcholine receptors tested. In Conus bandanus (Banded marble cone), this protein is Alpha-conotoxin-like Bn1.3.